Consider the following 500-residue polypeptide: Cytochrome P450 11B2, mitochondrial (500 aa).

The transit peptide at 1-24 directs the protein to the mitochondrion; the sequence is MALRVTADVWLARPWQCLHRTRAL. 21-hydroxyprogesterone is bound at residue Phe-381. Cys-447 contributes to the heme binding site.

The protein belongs to the cytochrome P450 family. Heme is required as a cofactor.

It is found in the mitochondrion inner membrane. It carries out the reaction a steroid + 2 reduced [adrenodoxin] + O2 + 2 H(+) = an 11beta-hydroxysteroid + 2 oxidized [adrenodoxin] + H2O. The catalysed reaction is 21-hydroxyprogesterone + 2 reduced [adrenodoxin] + O2 + 2 H(+) = corticosterone + 2 oxidized [adrenodoxin] + H2O. The enzyme catalyses corticosterone + 2 reduced [adrenodoxin] + O2 + 2 H(+) = 18-hydroxycorticosterone + 2 oxidized [adrenodoxin] + H2O. It catalyses the reaction 18-hydroxycorticosterone + 2 reduced [adrenodoxin] + O2 + 2 H(+) = aldosterone + 2 oxidized [adrenodoxin] + 2 H2O. It carries out the reaction 11-deoxycortisol + 2 reduced [adrenodoxin] + O2 + 2 H(+) = cortisol + 2 oxidized [adrenodoxin] + H2O. The catalysed reaction is 21-hydroxyprogesterone + 2 reduced [adrenodoxin] + O2 + 2 H(+) = 18-hydroxy-11-deoxycorticosterone + 2 oxidized [adrenodoxin] + H2O. The enzyme catalyses cortisol + 2 reduced [adrenodoxin] + O2 + 2 H(+) = 18-hydroxycortisol + 2 oxidized [adrenodoxin] + H2O. It catalyses the reaction 18-hydroxycortisol + 2 reduced [adrenodoxin] + O2 + 2 H(+) = 18-oxocortisol + 2 oxidized [adrenodoxin] + 2 H2O. It participates in steroid biosynthesis. A cytochrome P450 monooxygenase that catalyzes the biosynthesis of aldosterone, the main mineralocorticoid in the human body responsible for salt and water homeostasis, thus involved in blood pressure regulation, arterial hypertension, and the development of heart failure. Catalyzes three sequential oxidative reactions of 11-deoxycorticosterone (21-hydroxyprogesterone), namely 11-beta hydroxylation, followed by two successive oxidations at C18 yielding 18-hydroxy and then 18-oxo intermediates (that would not leave the enzyme active site during the consecutive hydroxylation reactions), ending with the formation of aldosterone. Can also produce 18-hydroxycortisol and 18-oxocortisol, derived from successive oxidations of cortisol at C18, normally found at very low levels, but significantly increased in primary aldosteronism, the most common form of secondary hypertension. Mechanistically, uses molecular oxygen inserting one oxygen atom into a substrate and reducing the second into a water molecule. Two electrons are provided by NADPH via a two-protein mitochondrial transfer system comprising flavoprotein FDXR (adrenodoxin/ferredoxin reductase) and nonheme iron-sulfur protein FDX1 or FDX2 (adrenodoxin/ferredoxin). Could also be involved in the androgen metabolic pathway. The protein is Cytochrome P450 11B2, mitochondrial (Cyp11b2) of Mus musculus (Mouse).